The following is a 132-amino-acid chain: Small ribosomal subunit protein uS8 (132 aa).

It belongs to the universal ribosomal protein uS8 family. In terms of assembly, part of the 30S ribosomal subunit. Contacts proteins S5 and S12.

Its function is as follows. One of the primary rRNA binding proteins, it binds directly to 16S rRNA central domain where it helps coordinate assembly of the platform of the 30S subunit. The polypeptide is Small ribosomal subunit protein uS8 (Bifidobacterium animalis subsp. lactis (strain AD011)).